A 170-amino-acid chain; its full sequence is Photosystem I assembly protein Ycf3 (170 aa).

3 TPR repeats span residues 35-68 (AFTY…EIDP), 72-105 (SYIL…NPFL), and 120-153 (GEQA…TPGN).

Belongs to the Ycf3 family.

It localises to the plastid. It is found in the chloroplast thylakoid membrane. In terms of biological role, essential for the assembly of the photosystem I (PSI) complex. May act as a chaperone-like factor to guide the assembly of the PSI subunits. The polypeptide is Photosystem I assembly protein Ycf3 (Oryza sativa (Rice)).